The sequence spans 359 residues: Putative gluconeogenesis factor (359 aa).

The disordered stretch occupies residues 317-359; it reads VGNQDSSAPTVAATEQIRLDGKRPQTGVNGPVGKGPRGDDAWR.

The protein belongs to the gluconeogenesis factor family.

The protein resides in the cytoplasm. Required for morphogenesis under gluconeogenic growth conditions. This is Putative gluconeogenesis factor from Mycobacterium leprae (strain TN).